We begin with the raw amino-acid sequence, 33 residues long: Gastrin (33 aa).

Q1 is modified (pyrrolidone carboxylic acid). F33 is subject to Phenylalanine amide.

It belongs to the gastrin/cholecystokinin family.

It localises to the secreted. Functionally, gastrin stimulates the stomach mucosa to produce and secrete hydrochloric acid and the pancreas to secrete its digestive enzymes. It also stimulates smooth muscle contraction and increases blood circulation and water secretion in the stomach and intestine. The polypeptide is Gastrin (GAST) (Cavia porcellus (Guinea pig)).